Reading from the N-terminus, the 258-residue chain is Glycerol-3-phosphate acyltransferase (258 aa).

6 helical membrane passes run 11–31 (IILA…IIIV), 62–82 (LVVA…AILL), 94–114 (SYFI…YYKF), 124–144 (LGLL…IWFI), 160–180 (ALII…YFIW), and 212–232 (WASG…ILAW).

The protein belongs to the PlsY family. As to quaternary structure, probably interacts with PlsX.

It localises to the cell membrane. The catalysed reaction is an acyl phosphate + sn-glycerol 3-phosphate = a 1-acyl-sn-glycero-3-phosphate + phosphate. It functions in the pathway lipid metabolism; phospholipid metabolism. Its function is as follows. Catalyzes the transfer of an acyl group from acyl-phosphate (acyl-PO(4)) to glycerol-3-phosphate (G3P) to form lysophosphatidic acid (LPA). This enzyme utilizes acyl-phosphate as fatty acyl donor, but not acyl-CoA or acyl-ACP. The chain is Glycerol-3-phosphate acyltransferase from Mycoplasma mycoides subsp. mycoides SC (strain CCUG 32753 / NCTC 10114 / PG1).